The following is a 78-amino-acid chain: Mandibular organ-inhibiting hormone 1 (78 aa).

3 disulfides stabilise this stretch: Cys-7–Cys-44, Cys-24–Cys-40, and Cys-27–Cys-53.

The protein belongs to the arthropod CHH/MIH/GIH/VIH hormone family. Produced by the medulla terminalis X-organ in the eyestalks and transported to the sinus gland where it is stored and released.

The protein localises to the secreted. Functionally, represses the synthesis of methyl farnesoate, the precursor of insect juvenile hormone III in the mandibular organ. This chain is Mandibular organ-inhibiting hormone 1, found in Cancer pagurus (Rock crab).